We begin with the raw amino-acid sequence, 541 residues long: Tyrosine-protein phosphatase non-receptor type 5 (541 aa).

Residues 1–55 are disordered; sequence MCCSERLLGLPQPVEMEAPDEAEGLPSKQKEMPPPPPPSPPSEPAQKLPPQGAGS. Pro residues predominate over residues 32-43; the sequence is MPPPPPPSPPSE. 2 helical membrane-spanning segments follow: residues 64–84 and 122–142; these read LCLFAASQFLLACGVLWLSGH and LLLVSLTVSLVIVTTLVWHLL. Ser221 carries the phosphoserine; by PKA modification. Phosphothreonine; by MAPK is present on Thr231. Ser244 carries the post-translational modification Phosphoserine; by MAPK. The Tyrosine-protein phosphatase domain maps to 276 to 531; it reads LQAEFFEIPM…QFVHHAMSLY (256 aa). Substrate-binding positions include Asp437, 472–478, and Gln516; that span reads CSAGIGR. Catalysis depends on Cys472, which acts as the Phosphocysteine intermediate.

It belongs to the protein-tyrosine phosphatase family. Non-receptor class subfamily. Post-translationally, phosphorylation at Ser-221 by PKA deactivates PTPN5. Phosphorylation at Thr-231 and Ser-244 by MAPKs stabilizes the phosphatase, dephosphorylation of these sites results in ubiquitin-mediated degradation of the active phosphatase. STEP20 is expressed only in the CNS.

The protein resides in the endoplasmic reticulum membrane. It localises to the cytoplasm. The catalysed reaction is O-phospho-L-tyrosyl-[protein] + H2O = L-tyrosyl-[protein] + phosphate. May regulate the activity of several effector molecules involved in synaptic plasticity and neuronal cell survival, including MAPKs, Src family kinases and NMDA receptors. This is Tyrosine-protein phosphatase non-receptor type 5 (Ptpn5) from Mus musculus (Mouse).